The sequence spans 228 residues: UPF0758 protein MW1604 (228 aa).

The region spanning 102 to 224 (KITQPSDVAD…FTSLVEAGYF (123 aa)) is the MPN domain. Zn(2+) contacts are provided by His-173, His-175, and Asp-186. The short motif at 173-186 (HNHPSGDVTPSQED) is the JAMM motif element.

The protein belongs to the UPF0758 family.

The protein is UPF0758 protein MW1604 of Staphylococcus aureus (strain MW2).